The chain runs to 221 residues: Cytidylate kinase 1 (221 aa).

Position 7-15 (glycine 7–serine 15) interacts with ATP.

Belongs to the cytidylate kinase family. Type 1 subfamily.

It localises to the cytoplasm. The catalysed reaction is CMP + ATP = CDP + ADP. The enzyme catalyses dCMP + ATP = dCDP + ADP. This Borrelia garinii subsp. bavariensis (strain ATCC BAA-2496 / DSM 23469 / PBi) (Borreliella bavariensis) protein is Cytidylate kinase 1.